The chain runs to 363 residues: Sulfate/thiosulfate import ATP-binding protein CysA (363 aa).

In terms of domain architecture, ABC transporter spans 3–237; the sequence is IEINNISKYF…PATRFVLEFL (235 aa). 35 to 42 is a binding site for ATP; it reads GPSGSGKT.

This sequence belongs to the ABC transporter superfamily. Sulfate/tungstate importer (TC 3.A.1.6) family. The complex is composed of two ATP-binding proteins (CysA), two transmembrane proteins (CysT and CysW) and a solute-binding protein (CysP).

It is found in the cell inner membrane. It catalyses the reaction sulfate(out) + ATP + H2O = sulfate(in) + ADP + phosphate + H(+). The enzyme catalyses thiosulfate(out) + ATP + H2O = thiosulfate(in) + ADP + phosphate + H(+). Part of the ABC transporter complex CysAWTP involved in sulfate/thiosulfate import. Responsible for energy coupling to the transport system. This is Sulfate/thiosulfate import ATP-binding protein CysA from Yersinia pseudotuberculosis serotype I (strain IP32953).